We begin with the raw amino-acid sequence, 454 residues long: Bleomycin hydrolase (454 aa).

M1 carries the post-translational modification N-acetylmethionine. Active-site residues include C73 and H372. K391 bears the N6-acetyllysine mark. N396 is a catalytic residue.

It belongs to the peptidase C1 family. Homohexamer. Interacts with NUDT12 (via ANK repeats). Expressed at relatively higher levels in the stomach, esophagus, spleen, thymus and testis, and at lower levels in the skin, lung and skeletal muscle.

It localises to the cytoplasm. The protein resides in the cytoplasmic granule. It catalyses the reaction Inactivates bleomycin B2 (a cytotoxic glycometallopeptide) by hydrolysis of a carboxyamide bond of beta-aminoalanine, but also shows general aminopeptidase activity. The specificity varies somewhat with source, but amino acid arylamides of Met, Leu and Ala are preferred.. Its function is as follows. The normal physiological role of BLM hydrolase is unknown, but it catalyzes the inactivation of the antitumor drug BLM (a glycopeptide) by hydrolyzing the carboxamide bond of its B-aminoalaninamide moiety thus protecting normal and malignant cells from BLM toxicity. Binds single-stranded DNA with higher affinity than double-stranded DNA. May play an important role in the metabolism of antibiotics. The polypeptide is Bleomycin hydrolase (Blmh) (Rattus norvegicus (Rat)).